The sequence spans 103 residues: Large ribosomal subunit protein uL24 (103 aa).

Belongs to the universal ribosomal protein uL24 family. As to quaternary structure, part of the 50S ribosomal subunit.

Its function is as follows. One of two assembly initiator proteins, it binds directly to the 5'-end of the 23S rRNA, where it nucleates assembly of the 50S subunit. In terms of biological role, one of the proteins that surrounds the polypeptide exit tunnel on the outside of the subunit. This is Large ribosomal subunit protein uL24 from Treponema pallidum (strain Nichols).